A 298-amino-acid polypeptide reads, in one-letter code: tRNA pseudouridine synthase-like 1 (298 aa).

The active-site Nucleophile is D60. Y124 serves as a coordination point for substrate.

The protein belongs to the tRNA pseudouridine synthase TruA family.

It catalyses the reaction a uridine in tRNA = a pseudouridine in tRNA. This is tRNA pseudouridine synthase-like 1 (pusl1) from Xenopus laevis (African clawed frog).